The following is a 549-amino-acid chain: Glucose-6-phosphate isomerase (549 aa).

E355 functions as the Proton donor in the catalytic mechanism. Catalysis depends on residues H386 and K514.

It belongs to the GPI family.

The protein resides in the cytoplasm. It catalyses the reaction alpha-D-glucose 6-phosphate = beta-D-fructose 6-phosphate. It participates in carbohydrate biosynthesis; gluconeogenesis. Its pathway is carbohydrate degradation; glycolysis; D-glyceraldehyde 3-phosphate and glycerone phosphate from D-glucose: step 2/4. Functionally, catalyzes the reversible isomerization of glucose-6-phosphate to fructose-6-phosphate. The polypeptide is Glucose-6-phosphate isomerase (Salmonella agona (strain SL483)).